A 477-amino-acid polypeptide reads, in one-letter code: MAGVEEAASCGSHLNGDLDPDEREEGAASTAEEAAKKKKRKKKKSKGAATGQQEPDKEAGASVDEVTRQLERQALEEKEKDDDDEDGDGDGDGATGKKKKKKKKKRGPKVQTDPPSVPICDLYPNGVFPKGQECEYPPTQDGRTAAWRTTSEEKKALDQASEEIWNDFREAAEAHRQVRKYVMSWIKPGMTMIEICEKMEDCSRKLIKENGLNAGLAFPTGCSLNNCAAHYTPNAGDTTVLQYDDICKIDFGTHISGRIIDCAFTVTFNPKYDTLLKAVKDATNTGIKCAGIDVRLCDVGEAIQEVMESYEVEIDGKTYQVKPIRNLNGHSIGPYRIHAGKTVPIVKGGEATRMEEGEVYAIETFGSTGKGVVHDDMECSHYMKNFDVGHVPIRLPRTKHLLNVINENFGTLAFCRRWLDRLGESKYLMALKNLCDLGIVDPYPPLCDIKGSYTAQFEHTILLRPTCKEVVSRGDDY.

Positions 1–121 (MAGVEEAASC…TDPPSVPICD (121 aa)) are disordered. N-acetylalanine is present on A2. Residues 36 to 46 (KKKKRKKKKSK) are compositionally biased toward basic residues. S45 is modified (phosphoserine). Over residues 54-78 (EPDKEAGASVDEVTRQLERQALEEK) the composition is skewed to basic and acidic residues. S62 is modified (phosphoserine; alternate). S62 is a glycosylation site (O-linked (GlcNAc) serine; alternate). The segment covering 79–91 (EKDDDDEDGDGDG) has biased composition (acidic residues). Positions 96 to 108 (GKKKKKKKKKRGP) are enriched in basic residues. H230 provides a ligand contact to substrate. A divalent metal cation is bound by residues D250, D261, and H330. H338 is a binding site for substrate. A divalent metal cation is bound by residues E363 and E458.

Belongs to the peptidase M24A family. Methionine aminopeptidase eukaryotic type 2 subfamily. As to quaternary structure, binds EIF2S1 at low magnesium concentrations. Interacts strongly with the eIF-2 gamma-subunit EIF2S3. Co(2+) serves as cofactor. The cofactor is Zn(2+). It depends on Mn(2+) as a cofactor. Fe(2+) is required as a cofactor. Post-translationally, contains approximately 12 O-linked N-acetylglucosamine (GlcNAc) residues. O-glycosylation is required for EIF2S1 binding.

It is found in the cytoplasm. The catalysed reaction is Release of N-terminal amino acids, preferentially methionine, from peptides and arylamides.. Its function is as follows. Cotranslationally removes the N-terminal methionine from nascent proteins. The N-terminal methionine is often cleaved when the second residue in the primary sequence is small and uncharged (Met-Ala-, Cys, Gly, Pro, Ser, Thr, or Val). Protects eukaryotic initiation factor EIF2S1 from translation-inhibiting phosphorylation by inhibitory kinases such as EIF2AK2/PKR and EIF2AK1/HCR. Plays a critical role in the regulation of protein synthesis. This Bos taurus (Bovine) protein is Methionine aminopeptidase 2.